A 371-amino-acid polypeptide reads, in one-letter code: Histidinol-phosphate aminotransferase (371 aa).

Lys-222 carries the post-translational modification N6-(pyridoxal phosphate)lysine.

It belongs to the class-II pyridoxal-phosphate-dependent aminotransferase family. Histidinol-phosphate aminotransferase subfamily. Homodimer. It depends on pyridoxal 5'-phosphate as a cofactor.

The catalysed reaction is L-histidinol phosphate + 2-oxoglutarate = 3-(imidazol-4-yl)-2-oxopropyl phosphate + L-glutamate. Its pathway is amino-acid biosynthesis; L-histidine biosynthesis; L-histidine from 5-phospho-alpha-D-ribose 1-diphosphate: step 7/9. The polypeptide is Histidinol-phosphate aminotransferase (Anoxybacillus flavithermus (strain DSM 21510 / WK1)).